Consider the following 635-residue polypeptide: Extracellular metalloproteinase 1 (635 aa).

The first 19 residues, 1–19 (MHGLLLAAGLLSLPLHVLA), serve as a signal peptide directing secretion. Residues 20–246 (HPQPSTSTSL…VHNVVDYVAH (227 aa)) constitute a propeptide that is removed on maturation. The N-linked (GlcNAc...) asparagine glycan is linked to Asn287. Zn(2+) is bound at residue His430. Residue Glu431 is part of the active site. His434 lines the Zn(2+) pocket. 3 N-linked (GlcNAc...) asparagine glycosylation sites follow: Asn475, Asn594, and Asn623.

Belongs to the peptidase M36 family. The cofactor is Zn(2+).

It localises to the secreted. Its function is as follows. Secreted metalloproteinase probably acting as a virulence factor. This chain is Extracellular metalloproteinase 1 (MEP1), found in Trichophyton tonsurans (Scalp ringworm fungus).